We begin with the raw amino-acid sequence, 759 residues long: 1,4-alpha-glucan branching enzyme GlgB (759 aa).

Positions 1 to 22 are disordered; the sequence is MAKTKGLPKDTAVTPSPHLRPH. The active-site Nucleophile is aspartate 422. Glutamate 475 (proton donor) is an active-site residue.

The protein belongs to the glycosyl hydrolase 13 family. GlgB subfamily. In terms of assembly, monomer.

The enzyme catalyses Transfers a segment of a (1-&gt;4)-alpha-D-glucan chain to a primary hydroxy group in a similar glucan chain.. It functions in the pathway glycan biosynthesis; glycogen biosynthesis. Catalyzes the formation of the alpha-1,6-glucosidic linkages in glycogen by scission of a 1,4-alpha-linked oligosaccharide from growing alpha-1,4-glucan chains and the subsequent attachment of the oligosaccharide to the alpha-1,6 position. This is 1,4-alpha-glucan branching enzyme GlgB from Mycobacterium sp. (strain KMS).